The chain runs to 424 residues: GTPase Obg (424 aa).

The Obg domain maps to 2–158 (AKFIDQVKIM…YEANIVLKIL (157 aa)). One can recognise an OBG-type G domain in the interval 159-326 (SDVGLVGLPS…LKKIIWEFLE (168 aa)). GTP is bound by residues 165-172 (GLPSCGKS), 190-194 (FTTLV), 211-214 (DLPG), 280-283 (NKSD), and 307-309 (SAL). The Mg(2+) site is built by Ser-172 and Thr-192. The 79-residue stretch at 344 to 422 (KEINYEPDFV…IYQHKFEWEE (79 aa)) folds into the OCT domain.

Belongs to the TRAFAC class OBG-HflX-like GTPase superfamily. OBG GTPase family. Monomer. Mg(2+) serves as cofactor.

The protein localises to the cytoplasm. An essential GTPase which binds GTP, GDP and possibly (p)ppGpp with moderate affinity, with high nucleotide exchange rates and a fairly low GTP hydrolysis rate. Plays a role in control of the cell cycle, stress response, ribosome biogenesis and in those bacteria that undergo differentiation, in morphogenesis control. The protein is GTPase Obg of Mycoplasmopsis synoviae (strain 53) (Mycoplasma synoviae).